The primary structure comprises 237 residues: Ribose-5-phosphate isomerase A (237 aa).

Substrate is bound by residues 33–36, 90–93, and 103–106; these read TGST, DGAD, and KGGG. The Proton acceptor role is filled by E112. K130 contacts substrate.

The protein belongs to the ribose 5-phosphate isomerase family. Homodimer.

The catalysed reaction is aldehydo-D-ribose 5-phosphate = D-ribulose 5-phosphate. Its pathway is carbohydrate degradation; pentose phosphate pathway; D-ribose 5-phosphate from D-ribulose 5-phosphate (non-oxidative stage): step 1/1. Its function is as follows. Catalyzes the reversible conversion of ribose-5-phosphate to ribulose 5-phosphate. The protein is Ribose-5-phosphate isomerase A of Trichodesmium erythraeum (strain IMS101).